The sequence spans 224 residues: Glutathione S-transferase Mu 5 (224 aa).

Positions 4-91 constitute a GST N-terminal domain; that stretch reads KSMVLGYWDI…YIARKHNMCG (88 aa). At S5 the chain carries Phosphoserine. Residues 10–11, 49–53, 62–63, and 75–76 each bind glutathione; these read YW, WLDVK, NL, and QS. One can recognise a GST C-terminal domain in the interval 93–211; that stretch reads TEEEKIRVDI…QSDRFFKMPI (119 aa). Position 119 (Y119) interacts with substrate.

Belongs to the GST superfamily. Mu family. Homodimer. Interacts with PFKM isoform 2 and isoform 3 (via N-terminal testis-specific region).

It localises to the cytoplasm. It carries out the reaction RX + glutathione = an S-substituted glutathione + a halide anion + H(+). In terms of biological role, conjugation of reduced glutathione to a wide number of exogenous and endogenous hydrophobic electrophiles. The sequence is that of Glutathione S-transferase Mu 5 (Gstm5) from Mus musculus (Mouse).